A 472-amino-acid chain; its full sequence is Siroheme synthase 1 (472 aa).

A precorrin-2 dehydrogenase /sirohydrochlorin ferrochelatase region spans residues 1-203 (MDYLPLFADL…GQLAQAEEEL (203 aa)). NAD(+) is bound by residues 22 to 23 (EV) and 43 to 44 (QT). Position 128 is a phosphoserine (Ser128). Positions 215 to 472 (GEVALVGAGP…AISPSVVNLA (258 aa)) are uroporphyrinogen-III C-methyltransferase. Pro224 is a binding site for S-adenosyl-L-methionine. Residue Asp247 is the Proton acceptor of the active site. Residue Lys269 is the Proton donor of the active site. S-adenosyl-L-methionine-binding positions include 300 to 302 (GGD), Ile305, 330 to 331 (TA), Met382, and Gly411.

This sequence in the N-terminal section; belongs to the precorrin-2 dehydrogenase / sirohydrochlorin ferrochelatase family. It in the C-terminal section; belongs to the precorrin methyltransferase family.

The catalysed reaction is uroporphyrinogen III + 2 S-adenosyl-L-methionine = precorrin-2 + 2 S-adenosyl-L-homocysteine + H(+). The enzyme catalyses precorrin-2 + NAD(+) = sirohydrochlorin + NADH + 2 H(+). It carries out the reaction siroheme + 2 H(+) = sirohydrochlorin + Fe(2+). Its pathway is cofactor biosynthesis; adenosylcobalamin biosynthesis; precorrin-2 from uroporphyrinogen III: step 1/1. It participates in cofactor biosynthesis; adenosylcobalamin biosynthesis; sirohydrochlorin from precorrin-2: step 1/1. The protein operates within porphyrin-containing compound metabolism; siroheme biosynthesis; precorrin-2 from uroporphyrinogen III: step 1/1. It functions in the pathway porphyrin-containing compound metabolism; siroheme biosynthesis; siroheme from sirohydrochlorin: step 1/1. Its pathway is porphyrin-containing compound metabolism; siroheme biosynthesis; sirohydrochlorin from precorrin-2: step 1/1. In terms of biological role, multifunctional enzyme that catalyzes the SAM-dependent methylations of uroporphyrinogen III at position C-2 and C-7 to form precorrin-2 via precorrin-1. Then it catalyzes the NAD-dependent ring dehydrogenation of precorrin-2 to yield sirohydrochlorin. Finally, it catalyzes the ferrochelation of sirohydrochlorin to yield siroheme. In Yersinia enterocolitica serotype O:8 / biotype 1B (strain NCTC 13174 / 8081), this protein is Siroheme synthase 1.